Consider the following 61-residue polypeptide: Small ribosomal subunit protein uS14 (61 aa).

Residues cysteine 24, cysteine 27, cysteine 40, and cysteine 43 each coordinate Zn(2+).

The protein belongs to the universal ribosomal protein uS14 family. Zinc-binding uS14 subfamily. As to quaternary structure, part of the 30S ribosomal subunit. Contacts proteins S3 and S10. Zn(2+) is required as a cofactor.

Binds 16S rRNA, required for the assembly of 30S particles and may also be responsible for determining the conformation of the 16S rRNA at the A site. The sequence is that of Small ribosomal subunit protein uS14 from Borrelia hermsii (strain HS1 / DAH).